The following is a 491-amino-acid chain: NADH-ubiquinone oxidoreductase chain 4 (491 aa).

14 consecutive transmembrane segments (helical) span residues 2 to 22 (IFHK…IINV), 37 to 57 (ALEW…AFDM), 89 to 109 (ISLF…LISW), 114 to 134 (FLLK…MGVF), 139 to 159 (LLLF…LIGV), 169 to 189 (ASYY…LGIF), 215 to 235 (WIFA…PFHI), 245 to 265 (PVSG…YGFL), 271 to 291 (ILPA…VIAI), 308 to 328 (IAYS…THTI), 332 to 352 (VAAV…FIAV), 372 to 392 (FSMP…MAIP), 412 to 432 (IVIG…SLYL), and 457 to 477 (IAIS…SLII).

This sequence belongs to the complex I subunit 4 family.

Its subcellular location is the mitochondrion membrane. It catalyses the reaction a ubiquinone + NADH + 5 H(+)(in) = a ubiquinol + NAD(+) + 4 H(+)(out). Functionally, core subunit of the mitochondrial membrane respiratory chain NADH dehydrogenase (Complex I) that is believed to belong to the minimal assembly required for catalysis. Complex I functions in the transfer of electrons from NADH to the respiratory chain. The immediate electron acceptor for the enzyme is believed to be ubiquinone. This is NADH-ubiquinone oxidoreductase chain 4 (ND4) from Metridium senile (Brown sea anemone).